The sequence spans 114 residues: Photosystem II reaction center Psb28 protein (114 aa).

The protein belongs to the Psb28 family. Part of the photosystem II complex.

The protein resides in the plastid. The protein localises to the chloroplast thylakoid membrane. This chain is Photosystem II reaction center Psb28 protein, found in Gracilaria tenuistipitata var. liui (Red alga).